The primary structure comprises 406 residues: Calreticulin (406 aa).

A signal peptide spans 1-17 (MMWCKTVIVLLATVGFI). The cysteines at positions 105 and 137 are disulfide-linked. An alpha-D-glucoside-binding residues include Tyr109, Lys111, Tyr128, and Asp135. Tandem repeats lie at residues 191–202 (VESGNLEDDWDF), 210–221 (DPTATKPEDWDD), 227–238 (DPDDKKPEDWDK), 244–255 (DPDATKPEDWDD), 259–269 (GEWEPPMIDNP), 273–283 (GEWQPKQLDNP), and 287–297 (GAWEHPEIANP). Residues 191–255 (VESGNLEDDW…DATKPEDWDD (65 aa)) form a 4 X approximate repeats region. The span at 207–251 (KIKDPTATKPEDWDDRATIPDPDDKKPEDWDKPEHIPDPDATKPE) shows a compositional bias: basic and acidic residues. Residues 207–259 (KIKDPTATKPEDWDDRATIPDPDDKKPEDWDKPEHIPDPDATKPEDWDDEMDG) form a disordered region. A 3 X approximate repeats region spans residues 259-297 (GEWEPPMIDNPEFKGEWQPKQLDNPNYKGAWEHPEIANP). Asp317 is an an alpha-D-glucoside binding site. The tract at residues 347 to 406 (KNTQAGEKKMKEAQDEVQRKKDEEEAKKASDKDDEDEDDDDEEKDDESKQDKDQSEHDEL) is disordered. Residues 352–377 (GEKKMKEAQDEVQRKKDEEEAKKASD) show a composition bias toward basic and acidic residues. Acidic residues predominate over residues 378-391 (KDDEDEDDDDEEKD). The span at 392–406 (DESKQDKDQSEHDEL) shows a compositional bias: basic and acidic residues.

It belongs to the calreticulin family.

The protein resides in the endoplasmic reticulum lumen. Functionally, molecular calcium-binding chaperone promoting folding, oligomeric assembly and quality control in the ER via the calreticulin/calnexin cycle. This lectin may interact transiently with almost all of the monoglucosylated glycoproteins that are synthesized in the ER. This is Calreticulin from Drosophila melanogaster (Fruit fly).